The chain runs to 314 residues: Porphobilinogen deaminase (314 aa).

At cysteine 234 the chain carries S-(dipyrrolylmethanemethyl)cysteine.

It belongs to the HMBS family. Monomer. The cofactor is dipyrromethane.

It catalyses the reaction 4 porphobilinogen + H2O = hydroxymethylbilane + 4 NH4(+). Its pathway is porphyrin-containing compound metabolism; protoporphyrin-IX biosynthesis; coproporphyrinogen-III from 5-aminolevulinate: step 2/4. Tetrapolymerization of the monopyrrole PBG into the hydroxymethylbilane pre-uroporphyrinogen in several discrete steps. The chain is Porphobilinogen deaminase from Mycobacterium marinum (strain ATCC BAA-535 / M).